A 232-amino-acid polypeptide reads, in one-letter code: Homeobox protein Rhox13 (232 aa).

The segment at 45–114 (QAAVASSHDS…EAAAPSVAAV (70 aa)) is disordered. The segment covering 68–105 (SDSESESDSESESDSSDSSDESDDDSSTSDEDTSDPEE) has biased composition (acidic residues). A DNA-binding region (homeobox) is located at residues 148 to 207 (RRGPPFHFAQWQVEEMESLFEETQYPDLLTRGELARTLNVPEVKVKVWFTNRRAKQRKIE).

The protein belongs to the paired-like homeobox family.

Its subcellular location is the nucleus. Probable transcription factor. This Mus musculus (Mouse) protein is Homeobox protein Rhox13.